A 442-amino-acid chain; its full sequence is Hydroxycinnamoyltransferase 1 (442 aa).

Residues H159 and D389 each act as proton acceptor in the active site.

The protein belongs to the plant acyltransferase family. Expressed in roots, leaves, stems and seeds.

Functionally, hydroxycinnamoyl transferase that catalyzes the transfer of an acyl from p-coumaryol-CoA to various acyl acceptors. Can use feruloyl-CoA and caffeoyl-CoA as acyl donors. This Oryza sativa subsp. japonica (Rice) protein is Hydroxycinnamoyltransferase 1.